Here is a 469-residue protein sequence, read N- to C-terminus: MTRPVRTRFAPSPTGFIHLGNIRSALYPWAFARKMKGTFVLRIEDTDVERSSQEAVDAILEGMQWLGLDFDEGPIYQMQRMDRYREVLAQMLEQGLAYPCYMSAEELDALRERQREAGLKPRYDGTWRPEPGKVLPEPPAGVKPVLRFRNPLTGTVVWDDAVKGRVEISNEELDDLVIARPDGTPIYNFCVVVDDMDMNITHVIRGDDHVNNTPRQINILRALGGEPPVYAHLPTVLNEQGEKMSKRHGAMSVMAYRDAGFLPEAVVNYLARLGWSHGDAEIFSREQFVEWFDLEHLGKSPAQYDHSKLSWLNAHYIKEADNARLAALAKPFLDALGIEDAAIATGPALDAVVGLMKDRATTVKEIAEGAAMFYRVPAPDADALAQHVTDAVRPALADLAAALKAADWTKEAVSAALKATLGTHKLKMPQLAMPVRLLVAGTTHTPSIDAVLVLFGRDVVVSRIEAALA.

The 'HIGH' region signature appears at Pro-11 to Asn-21. The short motif at Lys-243–Arg-247 is the 'KMSKS' region element. Lys-246 is a binding site for ATP.

The protein belongs to the class-I aminoacyl-tRNA synthetase family. Glutamate--tRNA ligase type 1 subfamily. In terms of assembly, monomer.

The protein resides in the cytoplasm. The catalysed reaction is tRNA(Glu) + L-glutamate + ATP = L-glutamyl-tRNA(Glu) + AMP + diphosphate. Functionally, catalyzes the attachment of glutamate to tRNA(Glu) in a two-step reaction: glutamate is first activated by ATP to form Glu-AMP and then transferred to the acceptor end of tRNA(Glu). The chain is Glutamate--tRNA ligase from Burkholderia ambifaria (strain MC40-6).